The chain runs to 218 residues: Capsid protein (218 aa).

M1 bears the N-acetylmethionine; by host mark. Residues 1 to 28 (MDKSESTSAGRNRRRRPRRGSRSAPSSA) are disordered. Positions 11 to 21 (RNRRRRPRRGS) are enriched in basic residues.

Belongs to the cucumovirus capsid protein family.

It is found in the virion. In terms of biological role, capsid protein. Probably binds RNA and plays a role in packaging. This is Capsid protein from Cucumis sativus (Cucumber).